Reading from the N-terminus, the 259-residue chain is Thiazole synthase (259 aa).

Lys95 serves as the catalytic Schiff-base intermediate with DXP. 1-deoxy-D-xylulose 5-phosphate is bound by residues Gly156, 182 to 183, and 204 to 205; these read AG and NT.

Belongs to the ThiG family. Homotetramer. Forms heterodimers with either ThiH or ThiS.

The protein resides in the cytoplasm. The enzyme catalyses [ThiS sulfur-carrier protein]-C-terminal-Gly-aminoethanethioate + 2-iminoacetate + 1-deoxy-D-xylulose 5-phosphate = [ThiS sulfur-carrier protein]-C-terminal Gly-Gly + 2-[(2R,5Z)-2-carboxy-4-methylthiazol-5(2H)-ylidene]ethyl phosphate + 2 H2O + H(+). The protein operates within cofactor biosynthesis; thiamine diphosphate biosynthesis. Its function is as follows. Catalyzes the rearrangement of 1-deoxy-D-xylulose 5-phosphate (DXP) to produce the thiazole phosphate moiety of thiamine. Sulfur is provided by the thiocarboxylate moiety of the carrier protein ThiS. In vitro, sulfur can be provided by H(2)S. In Proteus mirabilis (strain HI4320), this protein is Thiazole synthase.